The primary structure comprises 339 residues: Ketol-acid reductoisomerase (NADP(+)) (339 aa).

In terms of domain architecture, KARI N-terminal Rossmann spans 1-182; sequence MKVYYDSDAD…GGGRSGVIET (182 aa). NADP(+)-binding positions include 24 to 27, arginine 48, serine 51, serine 53, and 83 to 86; these read YGSQ and DEHQ. The active site involves histidine 108. Glycine 134 contacts NADP(+). The KARI C-terminal knotted domain maps to 183 to 328; that stretch reads TFREEVETDL…ARLRKMMPWI (146 aa). Aspartate 191, glutamate 195, glutamate 227, and glutamate 231 together coordinate Mg(2+). Substrate is bound at residue serine 252.

It belongs to the ketol-acid reductoisomerase family. It depends on Mg(2+) as a cofactor.

It catalyses the reaction (2R)-2,3-dihydroxy-3-methylbutanoate + NADP(+) = (2S)-2-acetolactate + NADPH + H(+). The catalysed reaction is (2R,3R)-2,3-dihydroxy-3-methylpentanoate + NADP(+) = (S)-2-ethyl-2-hydroxy-3-oxobutanoate + NADPH + H(+). Its pathway is amino-acid biosynthesis; L-isoleucine biosynthesis; L-isoleucine from 2-oxobutanoate: step 2/4. The protein operates within amino-acid biosynthesis; L-valine biosynthesis; L-valine from pyruvate: step 2/4. Functionally, involved in the biosynthesis of branched-chain amino acids (BCAA). Catalyzes an alkyl-migration followed by a ketol-acid reduction of (S)-2-acetolactate (S2AL) to yield (R)-2,3-dihydroxy-isovalerate. In the isomerase reaction, S2AL is rearranged via a Mg-dependent methyl migration to produce 3-hydroxy-3-methyl-2-ketobutyrate (HMKB). In the reductase reaction, this 2-ketoacid undergoes a metal-dependent reduction by NADPH to yield (R)-2,3-dihydroxy-isovalerate. In Zymomonas mobilis subsp. mobilis (strain ATCC 31821 / ZM4 / CP4), this protein is Ketol-acid reductoisomerase (NADP(+)).